A 502-amino-acid polypeptide reads, in one-letter code: ATP synthase subunit alpha (502 aa).

169–176 provides a ligand contact to ATP; the sequence is GDRQTGKT.

Belongs to the ATPase alpha/beta chains family. As to quaternary structure, F-type ATPases have 2 components, CF(1) - the catalytic core - and CF(0) - the membrane proton channel. CF(1) has five subunits: alpha(3), beta(3), gamma(1), delta(1), epsilon(1). CF(0) has three main subunits: a(1), b(2) and c(9-12). The alpha and beta chains form an alternating ring which encloses part of the gamma chain. CF(1) is attached to CF(0) by a central stalk formed by the gamma and epsilon chains, while a peripheral stalk is formed by the delta and b chains.

It localises to the cell membrane. The catalysed reaction is ATP + H2O + 4 H(+)(in) = ADP + phosphate + 5 H(+)(out). Its function is as follows. Produces ATP from ADP in the presence of a proton gradient across the membrane. The alpha chain is a regulatory subunit. This Streptococcus pyogenes serotype M18 (strain MGAS8232) protein is ATP synthase subunit alpha.